A 238-amino-acid polypeptide reads, in one-letter code: Ribonuclease PH (238 aa).

Phosphate-binding positions include R86 and G124 to R126.

It belongs to the RNase PH family. As to quaternary structure, homohexameric ring arranged as a trimer of dimers.

It catalyses the reaction tRNA(n+1) + phosphate = tRNA(n) + a ribonucleoside 5'-diphosphate. Phosphorolytic 3'-5' exoribonuclease that plays an important role in tRNA 3'-end maturation. Removes nucleotide residues following the 3'-CCA terminus of tRNAs; can also add nucleotides to the ends of RNA molecules by using nucleoside diphosphates as substrates, but this may not be physiologically important. Probably plays a role in initiation of 16S rRNA degradation (leading to ribosome degradation) during starvation. The polypeptide is Ribonuclease PH (Geobacter sulfurreducens (strain ATCC 51573 / DSM 12127 / PCA)).